The primary structure comprises 204 residues: NAD(P)H dehydrogenase (quinone) (204 aa).

Positions 3-194 constitute a Flavodoxin-like domain; that stretch reads VLIVFYSMYG…AGARYQGRHV (192 aa). FMN is bound by residues 9 to 14 and 82 to 84; these read SMYGHI and TRF. Tyr11 serves as a coordination point for NAD(+). A substrate-binding site is contributed by Trp102. His138 lines the FMN pocket.

The protein belongs to the WrbA family. Requires FMN as cofactor.

It catalyses the reaction a quinone + NADH + H(+) = a quinol + NAD(+). The catalysed reaction is a quinone + NADPH + H(+) = a quinol + NADP(+). The protein is NAD(P)H dehydrogenase (quinone) of Syntrophobacter fumaroxidans (strain DSM 10017 / MPOB).